The sequence spans 1120 residues: Hachiman protein HamB (1120 aa).

The 175-residue stretch at 278–452 (DGELLKNDGF…WIGEDDKAKR (175 aa)) folds into the Helicase ATP-binding domain. 291 to 298 (MPTSSGKT) contributes to the ATP binding site. A DEAH box motif is present at residues 395–398 (DEGH). The Helicase C-terminal domain maps to 521–710 (ATATKMLDVG…NIEKATSGLY (190 aa)).

It belongs to the helicase family.

Component of antiviral defense system Hachiman, composed of HamA and HamB. Expression of Hachiman in B.subtilis (strain BEST7003) confers resistance to phages phi105, phi29, phi3T, rho14, SBSphiJ, SpBeta and SPR. Probably a helicase. The polypeptide is Hachiman protein HamB (Bacillus cereus).